The following is a 198-amino-acid chain: Ion-translocating oxidoreductase complex subunit B (198 aa).

A hydrophobic region spans residues 1–26 (MTTIMIAVLAIALLATLFGAILGFAS). Residues 32-90 (EADPIVDQIDAILPQTQCGQCGYPGCRPYAEAIANGDSINKCPPGGQATIEKLADLMGV) form the 4Fe-4S domain. Positions 49, 52, 57, 73, 114, 117, 120, 124, 144, 147, 150, and 154 each coordinate [4Fe-4S] cluster. 2 consecutive 4Fe-4S ferredoxin-type domains span residues 105 to 134 (KVAF…GGTK) and 135 to 164 (ALHT…MIPL).

Belongs to the 4Fe4S bacterial-type ferredoxin family. RnfB subfamily. The complex is composed of six subunits: RnfA, RnfB, RnfC, RnfD, RnfE and RnfG. The cofactor is [4Fe-4S] cluster.

Its subcellular location is the cell inner membrane. Functionally, part of a membrane-bound complex that couples electron transfer with translocation of ions across the membrane. The chain is Ion-translocating oxidoreductase complex subunit B from Vibrio vulnificus (strain CMCP6).